A 188-amino-acid polypeptide reads, in one-letter code: Ribosome-recycling factor (188 aa).

Belongs to the RRF family.

The protein localises to the cytoplasm. Its function is as follows. Responsible for the release of ribosomes from messenger RNA at the termination of protein biosynthesis. May increase the efficiency of translation by recycling ribosomes from one round of translation to another. The sequence is that of Ribosome-recycling factor from Anaeromyxobacter dehalogenans (strain 2CP-C).